A 286-amino-acid polypeptide reads, in one-letter code: Bifunctional protein FolD (286 aa).

Residues 168–170, T195, and V236 contribute to the NADP(+) site; that span reads GRG.

The protein belongs to the tetrahydrofolate dehydrogenase/cyclohydrolase family. Homodimer.

The catalysed reaction is (6R)-5,10-methylene-5,6,7,8-tetrahydrofolate + NADP(+) = (6R)-5,10-methenyltetrahydrofolate + NADPH. It catalyses the reaction (6R)-5,10-methenyltetrahydrofolate + H2O = (6R)-10-formyltetrahydrofolate + H(+). The protein operates within one-carbon metabolism; tetrahydrofolate interconversion. Functionally, catalyzes the oxidation of 5,10-methylenetetrahydrofolate to 5,10-methenyltetrahydrofolate and then the hydrolysis of 5,10-methenyltetrahydrofolate to 10-formyltetrahydrofolate. The protein is Bifunctional protein FolD of Mycolicibacterium fortuitum (Mycobacterium fortuitum).